Reading from the N-terminus, the 283-residue chain is 4-diphosphocytidyl-2-C-methyl-D-erythritol kinase (283 aa).

Lysine 10 is an active-site residue. Residue 99–109 (PMGGGLGGGSS) participates in ATP binding. Aspartate 141 is a catalytic residue.

Belongs to the GHMP kinase family. IspE subfamily. In terms of assembly, homodimer.

It catalyses the reaction 4-CDP-2-C-methyl-D-erythritol + ATP = 4-CDP-2-C-methyl-D-erythritol 2-phosphate + ADP + H(+). Its pathway is isoprenoid biosynthesis; isopentenyl diphosphate biosynthesis via DXP pathway; isopentenyl diphosphate from 1-deoxy-D-xylulose 5-phosphate: step 3/6. In terms of biological role, catalyzes the phosphorylation of the position 2 hydroxy group of 4-diphosphocytidyl-2C-methyl-D-erythritol. The chain is 4-diphosphocytidyl-2-C-methyl-D-erythritol kinase from Salmonella arizonae (strain ATCC BAA-731 / CDC346-86 / RSK2980).